Reading from the N-terminus, the 476-residue chain is Cysteine--tRNA ligase (476 aa).

Zn(2+) is bound at residue Cys-28. The 'HIGH' region motif lies at 30 to 40; it reads VTTYDFCHIGH. Cys-215, His-241, and Glu-245 together coordinate Zn(2+). Residues 273-277 carry the 'KMSKS' region motif; sequence KMSKS. ATP is bound at residue Lys-276.

Belongs to the class-I aminoacyl-tRNA synthetase family. As to quaternary structure, monomer. It depends on Zn(2+) as a cofactor.

Its subcellular location is the cytoplasm. It catalyses the reaction tRNA(Cys) + L-cysteine + ATP = L-cysteinyl-tRNA(Cys) + AMP + diphosphate. In Buchnera aphidicola subsp. Cinara cedri (strain Cc), this protein is Cysteine--tRNA ligase.